Reading from the N-terminus, the 354-residue chain is UPF0496 protein At4g34330 (354 aa).

Helical transmembrane passes span 200–220 (IIFMATFATLVICSVLAATMA) and 222–242 (PHVAAALAAATPPVGSMGKWI). Residues 270–341 (AVQDLNNIKD…CSTDIRRART (72 aa)) adopt a coiled-coil conformation.

The protein belongs to the UPF0496 family.

It is found in the membrane. This Arabidopsis thaliana (Mouse-ear cress) protein is UPF0496 protein At4g34330.